A 55-amino-acid chain; its full sequence is Large ribosomal subunit protein bL33 (55 aa).

The protein belongs to the bacterial ribosomal protein bL33 family.

In Dehalococcoides mccartyi (strain ATCC BAA-2100 / JCM 16839 / KCTC 5957 / BAV1), this protein is Large ribosomal subunit protein bL33.